Here is a 109-residue protein sequence, read N- to C-terminus: Cytochrome c oxidase subunit 6A1, mitochondrial (109 aa).

The transit peptide at 1–24 (MAAAAGSRVFGLLGRSRLQLSRCM) directs the protein to the mitochondrion. Over 25-34 (SSGAHGEEGS) the chain is Mitochondrial matrix. A helical membrane pass occupies residues 35 to 59 (ARMWKALTYFVALPGVGVSMLNVFL). Residues 60 to 109 (KSHHGEEERPEFVAYPHLRIRSKPFPWGDGNHTLFHNPHVNPLPTGYEDE) lie on the Mitochondrial intermembrane side of the membrane.

This sequence belongs to the cytochrome c oxidase subunit 6A family. In terms of assembly, component of the cytochrome c oxidase (complex IV, CIV), a multisubunit enzyme composed of 14 subunits. The complex is composed of a catalytic core of 3 subunits MT-CO1, MT-CO2 and MT-CO3, encoded in the mitochondrial DNA, and 11 supernumerary subunits COX4I1 (or COX4I2), COX5A, COX5B, COX6A2 (or COX6A1), COX6B1 (or COX6B2), COX6C, COX7A1 (or COX7A2), COX7B, COX7C, COX8B and NDUFA4, which are encoded in the nuclear genome. The complex exists as a monomer or a dimer and forms supercomplexes (SCs) in the inner mitochondrial membrane with NADH-ubiquinone oxidoreductase (complex I, CI) and ubiquinol-cytochrome c oxidoreductase (cytochrome b-c1 complex, complex III, CIII), resulting in different assemblies (supercomplex SCI(1)III(2)IV(1) and megacomplex MCI(2)III(2)IV(2)).

It localises to the mitochondrion inner membrane. It functions in the pathway energy metabolism; oxidative phosphorylation. Its function is as follows. Component of the cytochrome c oxidase, the last enzyme in the mitochondrial electron transport chain which drives oxidative phosphorylation. The respiratory chain contains 3 multisubunit complexes succinate dehydrogenase (complex II, CII), ubiquinol-cytochrome c oxidoreductase (cytochrome b-c1 complex, complex III, CIII) and cytochrome c oxidase (complex IV, CIV), that cooperate to transfer electrons derived from NADH and succinate to molecular oxygen, creating an electrochemical gradient over the inner membrane that drives transmembrane transport and the ATP synthase. Cytochrome c oxidase is the component of the respiratory chain that catalyzes the reduction of oxygen to water. Electrons originating from reduced cytochrome c in the intermembrane space (IMS) are transferred via the dinuclear copper A center (CU(A)) of subunit 2 and heme A of subunit 1 to the active site in subunit 1, a binuclear center (BNC) formed by heme A3 and copper B (CU(B)). The BNC reduces molecular oxygen to 2 water molecules unsing 4 electrons from cytochrome c in the IMS and 4 protons from the mitochondrial matrix. This is Cytochrome c oxidase subunit 6A1, mitochondrial (COX6A1) from Bos taurus (Bovine).